Reading from the N-terminus, the 299-residue chain is Putative S-adenosyl-L-methionine-dependent methyltransferase MAB_0027c (299 aa).

S-adenosyl-L-methionine-binding positions include Asp126 and Asp155–Leu156.

It belongs to the UPF0677 family.

Its function is as follows. Exhibits S-adenosyl-L-methionine-dependent methyltransferase activity. In Mycobacteroides abscessus (strain ATCC 19977 / DSM 44196 / CCUG 20993 / CIP 104536 / JCM 13569 / NCTC 13031 / TMC 1543 / L948) (Mycobacterium abscessus), this protein is Putative S-adenosyl-L-methionine-dependent methyltransferase MAB_0027c.